The sequence spans 156 residues: E3 ubiquitin-protein ligase RNF181 (156 aa).

The RING-type; atypical zinc finger occupies cysteine 79 to arginine 120.

This sequence belongs to the RNF181 family.

The catalysed reaction is S-ubiquitinyl-[E2 ubiquitin-conjugating enzyme]-L-cysteine + [acceptor protein]-L-lysine = [E2 ubiquitin-conjugating enzyme]-L-cysteine + N(6)-ubiquitinyl-[acceptor protein]-L-lysine.. The protein operates within protein modification; protein ubiquitination. In terms of biological role, E3 ubiquitin-protein ligase which accepts ubiquitin from an E2 ubiquitin-conjugating enzyme in the form of a thioester and then directly transfers the ubiquitin to targeted substrates. Catalyzes monoubiquitination of 26S proteasome subunit PSMC2/RPT1. The sequence is that of E3 ubiquitin-protein ligase RNF181 (rnf181) from Xenopus laevis (African clawed frog).